A 1192-amino-acid polypeptide reads, in one-letter code: Coiled-coil domain-containing protein 40 (1192 aa).

Disordered stretches follow at residues 1–78, 126–153, 173–196, 211–246, and 261–289; these read MMDA…PGMD, KAKH…LEVS, SSPE…NVSA, EPIE…YQRD, and GSLT…STPR. Acidic residues predominate over residues 27–45; that stretch reads PETEVEFIGETAPDTDVEF. A compositionally biased stretch (pro residues) spans 215–228; the sequence is PTEPPEPAEPPKPA. Over residues 267–279 the composition is skewed to acidic residues; the sequence is DTDDLPLETDEPP. Position 306 is a phosphoserine (serine 306). 7 coiled-coil regions span residues 308-369, 425-451, 581-649, 733-768, 830-871, 919-972, and 1044-1118; these read EALL…ATKQ, KTCQ…ALHL, DSEI…MLNK, NTNC…EIAR, LQQE…KIAH, LRTL…EMRS, and QQRE…IVTL.

The protein belongs to the CCDC40 family. As to expression, specifically expressed in the embryonic node and midline.

Its subcellular location is the cytoplasm. The protein resides in the cell projection. The protein localises to the cilium. Its function is as follows. Required for assembly of dynein regulatory complex (DRC) and inner dynein arm (IDA) complexes, which are responsible for ciliary beat regulation, thereby playing a central role in motility in cilia and flagella. Probably acts together with CCDC39 to form a molecular ruler that determines the 96 nanometer (nm) repeat length and arrangements of components in cilia and flagella. Not required for outer dynein arm complexes assembly. Required for axonemal recruitment of CCDC39. The protein is Coiled-coil domain-containing protein 40 of Mus musculus (Mouse).